The following is a 325-amino-acid chain: Flotillin-like protein FloA (325 aa).

2 helical membrane passes run 4–24 and 26–46; these read LGIV…FSFI and VGLW…TLVA.

Belongs to the flotillin-like FloA family. In terms of assembly, homooligomerizes.

The protein resides in the cell membrane. The protein localises to the membrane raft. Found in functional membrane microdomains (FMM) that may be equivalent to eukaryotic membrane rafts. FMMs are highly dynamic and increase in number as cells age. Flotillins are thought to be important factors in membrane fluidity. This is Flotillin-like protein FloA from Thermus thermophilus (strain ATCC BAA-163 / DSM 7039 / HB27).